Here is a 157-residue protein sequence, read N- to C-terminus: Endoribonuclease YbeY (157 aa).

Positions 114, 118, and 124 each coordinate Zn(2+).

This sequence belongs to the endoribonuclease YbeY family. It depends on Zn(2+) as a cofactor.

The protein resides in the cytoplasm. Its function is as follows. Single strand-specific metallo-endoribonuclease involved in late-stage 70S ribosome quality control and in maturation of the 3' terminus of the 16S rRNA. The protein is Endoribonuclease YbeY of Yersinia pestis.